The following is a 184-amino-acid chain: MGVIQTLDGLMNNPTPEGRVDDILRPEGDNPLLEKGFVTTSVDALLNWARTGSMWPMTFGLACCAVEMMHAGAARLDLDRYGVVFRPSPRQSDVMIVAGTLVNKMAPALRKVYDQMPDPKWVISMGSCANGGGYYHYSYSVVRGCDRVVPVDVYVPGCPPTAEALVYGILQLQKKIWRTQTIAR.

[4Fe-4S] cluster-binding residues include cysteine 63, cysteine 64, cysteine 128, and cysteine 158.

It belongs to the complex I 20 kDa subunit family. In terms of assembly, NDH-1 is composed of 14 different subunits. Subunits NuoB, C, D, E, F, and G constitute the peripheral sector of the complex. It depends on [4Fe-4S] cluster as a cofactor.

The protein localises to the cell inner membrane. The enzyme catalyses a quinone + NADH + 5 H(+)(in) = a quinol + NAD(+) + 4 H(+)(out). In terms of biological role, NDH-1 shuttles electrons from NADH, via FMN and iron-sulfur (Fe-S) centers, to quinones in the respiratory chain. Couples the redox reaction to proton translocation (for every two electrons transferred, four hydrogen ions are translocated across the cytoplasmic membrane), and thus conserves the redox energy in a proton gradient. The protein is NADH-quinone oxidoreductase subunit B of Stenotrophomonas maltophilia (strain R551-3).